A 311-amino-acid chain; its full sequence is Cadmium, cobalt and zinc/H(+)-K(+) antiporter (311 aa).

The Extracellular portion of the chain corresponds to 1–12; that stretch reads MGHNHNEGANKK. Residues 13–33 form a helical membrane-spanning segment; that stretch reads VLLISFIMITGYMIIEAIGGF. Over 34-43 the chain is Cytoplasmic; the sequence is LTNSLALLSD. A helical transmembrane segment spans residues 44–64; the sequence is AGHMLSDSISLMVALIAFTLA. The Extracellular segment spans residues 65 to 78; the sequence is EKKANHNKTFGYKR. The helical transmembrane segment at 79-99 threads the bilayer; sequence FEILAAVINGAALILISLYII. At 100–115 the chain is on the cytoplasmic side; sequence YEAIERFSNPPKVATT. A helical transmembrane segment spans residues 116 to 136; that stretch reads GMLTISIIGLVVNLLVAWIMM. Over 137–157 the chain is Extracellular; that stretch reads SGGDTKNNLNIRGAYLHVISD. A helical transmembrane segment spans residues 158-178; that stretch reads MLGSVGAILAAILIIFFGWGW. Residues 179-311 are Cytoplasmic-facing; that stretch reads ADPLASIIVA…MEKQRDHHHH (133 aa).

Belongs to the cation diffusion facilitator (CDF) transporter (TC 2.A.4) family. SLC30A subfamily.

It is found in the cell membrane. Functionally, involved in divalent cation and potassium homeostasis in the cell. Catalyzes the active efflux of zinc, cadmium and cobalt, in exchange for potassium and H(+) ions. The sequence is that of Cadmium, cobalt and zinc/H(+)-K(+) antiporter (czcD) from Bacillus subtilis (strain 168).